Consider the following 300-residue polypeptide: NAD kinase (300 aa).

Catalysis depends on Asp75, which acts as the Proton acceptor. NAD(+) is bound by residues 75–76, 149–150, Arg177, Asp179, 190–195, Ala214, and Gln248; these read DG, ND, and TAYALS.

The protein belongs to the NAD kinase family. The cofactor is a divalent metal cation.

The protein resides in the cytoplasm. The enzyme catalyses NAD(+) + ATP = ADP + NADP(+) + H(+). Functionally, involved in the regulation of the intracellular balance of NAD and NADP, and is a key enzyme in the biosynthesis of NADP. Catalyzes specifically the phosphorylation on 2'-hydroxyl of the adenosine moiety of NAD to yield NADP. The protein is NAD kinase of Burkholderia cenocepacia (strain ATCC BAA-245 / DSM 16553 / LMG 16656 / NCTC 13227 / J2315 / CF5610) (Burkholderia cepacia (strain J2315)).